A 226-amino-acid chain; its full sequence is 8-oxoguanine DNA glycosylase/AP lyase (226 aa).

Catalysis depends on residues Lys-149 and Asp-167.

Belongs to the type-2 OGG1 family.

It carries out the reaction 2'-deoxyribonucleotide-(2'-deoxyribose 5'-phosphate)-2'-deoxyribonucleotide-DNA = a 3'-end 2'-deoxyribonucleotide-(2,3-dehydro-2,3-deoxyribose 5'-phosphate)-DNA + a 5'-end 5'-phospho-2'-deoxyribonucleoside-DNA + H(+). In terms of biological role, catalyzes the excision of an oxidatively damaged form of guanine (7,8-dihydro-8-oxoguanine = 8-oxoG) from DNA. Also cleaves the DNA backbone at apurinic/apyrimidinic sites (AP sites). This is 8-oxoguanine DNA glycosylase/AP lyase from Aquifex aeolicus (strain VF5).